The sequence spans 236 residues: Biosynthetic peptidoglycan transglycosylase (236 aa).

Residues Ala-12 to Pro-31 form a helical membrane-spanning segment.

The protein belongs to the glycosyltransferase 51 family.

The protein localises to the cell inner membrane. It catalyses the reaction [GlcNAc-(1-&gt;4)-Mur2Ac(oyl-L-Ala-gamma-D-Glu-L-Lys-D-Ala-D-Ala)](n)-di-trans,octa-cis-undecaprenyl diphosphate + beta-D-GlcNAc-(1-&gt;4)-Mur2Ac(oyl-L-Ala-gamma-D-Glu-L-Lys-D-Ala-D-Ala)-di-trans,octa-cis-undecaprenyl diphosphate = [GlcNAc-(1-&gt;4)-Mur2Ac(oyl-L-Ala-gamma-D-Glu-L-Lys-D-Ala-D-Ala)](n+1)-di-trans,octa-cis-undecaprenyl diphosphate + di-trans,octa-cis-undecaprenyl diphosphate + H(+). The protein operates within cell wall biogenesis; peptidoglycan biosynthesis. Its function is as follows. Peptidoglycan polymerase that catalyzes glycan chain elongation from lipid-linked precursors. The protein is Biosynthetic peptidoglycan transglycosylase of Pseudomonas putida (strain ATCC 47054 / DSM 6125 / CFBP 8728 / NCIMB 11950 / KT2440).